A 1233-amino-acid chain; its full sequence is uncharacterized protein (1233 aa).

7 disordered regions span residues 1–39, 65–116, 160–211, 250–577, 594–825, 851–872, and 902–955; these read MVES…PSTN, QELS…DAIS, AEGT…TDLS, EKMD…DAPR, DLEV…NSEK, NKEN…NSEK, and EDVE…ENSK. Residues 72-83 show a composition bias toward basic residues; that stretch reads KSSKLKGHKKKN. Ser180 carries the phosphoserine modification. Residues 183-199 show a composition bias toward basic residues; the sequence is TRRKKNKKKKTTNRRGR. Polar residues predominate over residues 201–211; it reads SSNPADTTDLS. 2 stretches are compositionally biased toward basic and acidic residues: residues 250–280 and 287–300; these read EKMD…ETSS and NEEK…REEN. A compositionally biased stretch (polar residues) spans 329 to 345; sequence GQASTKDVESESLTKNG. Composition is skewed to basic and acidic residues over residues 349–370 and 379–408; these read KENE…DRDG and NQKE…ELSV. Positions 409 to 422 are enriched in polar residues; sequence NHENNMSHNFNAAG. Residue Ser462 is modified to Phosphoserine. Residues 466 to 478 show a composition bias toward acidic residues; that stretch reads EKEEEEEEEEEEN. Composition is skewed to basic and acidic residues over residues 484 to 497, 508 to 527, 594 to 622, 631 to 672, and 684 to 711; these read VKKE…EAVR, STSK…EAGE, DLEV…DKIA, EDMK…KTPE, and RPED…DVKP. Ser523 carries the post-translational modification Phosphoserine. The segment covering 728–739 has biased composition (polar residues); that stretch reads QRVQISTEQAET. Residues 753 to 783 are compositionally biased toward basic and acidic residues; the sequence is FKEEEKPKRFEITQEGDKITGKDTNHEHGEA. Acidic residues predominate over residues 855–868; that stretch reads EDVEVDTEEDAEVE. Thr861 carries the phosphothreonine modification. Composition is skewed to basic and acidic residues over residues 910 to 920 and 935 to 948; these read SKEDIETKCSE and EVSK…TKED. Ser975 bears the Phosphoserine mark. Disordered regions lie at residues 984–1071 and 1109–1128; these read LPEL…PKKA and KDST…KPQD. Residues 986 to 999 are compositionally biased toward basic and acidic residues; sequence ELEKQDIKDNKGED. Phosphoserine is present on residues Ser1037 and Ser1046. Composition is skewed to basic and acidic residues over residues 1062–1071 and 1118–1127; these read QSTRENPKKA and QSKKNNDKPQ. The region spanning 1132 to 1233 is the Glutaredoxin domain; sequence TSEIRKLNEK…KLRELIYDTI (102 aa).

This is an uncharacterized protein from Saccharomyces cerevisiae (strain ATCC 204508 / S288c) (Baker's yeast).